Consider the following 973-residue polypeptide: Coatomer subunit beta (973 aa).

HEAT repeat units follow at residues 98 to 133 (HEMILVCNAIQHDLQHPNEYIRGNTLRFLTKLREAE) and 134 to 170 (LLEQMVPSVLACLEYRHAYVRKYAILAVFSIFKVSEH). Serine 181 is subject to Phosphoserine. HEAT repeat units follow at residues 279 to 317 (NVLVPAVNKLIDLAVKVSDNNIKLIVLDRIQDINANNVG) and 318 to 354 (ALEELTLDILRVLNAEDLDVRSKALDISMDLATSRNA). Phosphoserine is present on serine 540.

As to quaternary structure, oligomeric complex that consists of at least the alpha, beta, beta', gamma, delta, epsilon and zeta subunits. The complex interacts with ARF1 and PAB1. The N-terminus is blocked.

The protein localises to the cytoplasm. It localises to the golgi apparatus membrane. Its subcellular location is the cytoplasmic vesicle. The protein resides in the COPI-coated vesicle membrane. Functionally, the coatomer is a cytosolic protein complex that binds to dilysine motifs and reversibly associates with Golgi non-clathrin-coated vesicles, which further mediate biosynthetic protein transport from the ER, via the Golgi up to the trans Golgi network. Coatomer complex is required for budding from Golgi membranes, and is essential for the retrograde Golgi-to-ER transport of dilysine-tagged proteins. Required for mitochondrial morphology. The chain is Coatomer subunit beta (SEC26) from Saccharomyces cerevisiae (strain ATCC 204508 / S288c) (Baker's yeast).